Here is a 248-residue protein sequence, read N- to C-terminus: Triosephosphate isomerase (248 aa).

9–11 serves as a coordination point for substrate; that stretch reads NWK. The active-site Electrophile is the His-101. Glu-170 serves as the catalytic Proton acceptor. Substrate contacts are provided by residues Gly-176, Ser-208, and 229–230; that span reads GG.

Belongs to the triosephosphate isomerase family. As to quaternary structure, homodimer.

It is found in the cytoplasm. It carries out the reaction D-glyceraldehyde 3-phosphate = dihydroxyacetone phosphate. It participates in carbohydrate biosynthesis; gluconeogenesis. Its pathway is carbohydrate degradation; glycolysis; D-glyceraldehyde 3-phosphate from glycerone phosphate: step 1/1. Functionally, involved in the gluconeogenesis. Catalyzes stereospecifically the conversion of dihydroxyacetone phosphate (DHAP) to D-glyceraldehyde-3-phosphate (G3P). The sequence is that of Triosephosphate isomerase from Mycoplasmopsis pulmonis (strain UAB CTIP) (Mycoplasma pulmonis).